Here is a 119-residue protein sequence, read N- to C-terminus: Beta-2-microglobulin (119 aa).

The N-terminal stretch at 1 to 20 is a signal peptide; that stretch reads MARTVATFFLMLVSLACLDA. The region spanning 25–114 is the Ig-like C1-type domain; sequence PQVQVYTRHP…VTLKEPKVVT (90 aa). Cys-45 and Cys-100 are joined by a disulfide.

This sequence belongs to the beta-2-microglobulin family. As to quaternary structure, heterodimer of an alpha chain and a beta chain. Beta-2-microglobulin is the beta-chain of major histocompatibility complex class I molecules.

The protein resides in the secreted. In terms of biological role, component of the class I major histocompatibility complex (MHC). Involved in the presentation of peptide antigens to the immune system. This chain is Beta-2-microglobulin (B2M), found in Sigmodon hispidus (Hispid cotton rat).